A 618-amino-acid polypeptide reads, in one-letter code: Auxin efflux carrier component 3a (618 aa).

Topologically, residues 1 to 6 (MISGHD) are extracellular. Residues 7–27 (FYTVMAAVVPLYVAMFLAYGS) form a helical membrane-spanning segment. Topologically, residues 28-38 (VRWWGIFTPDQ) are cytoplasmic. Residues 39–59 (CSGINRFVAIFAVPLLSFHFI) traverse the membrane as a helical segment. V51 lines the (indol-3-yl)acetate pocket. Over 60 to 70 (STNDPYAMNLR) the chain is Extracellular. A helical transmembrane segment spans residues 71–90 (FLAADTLQKLLVLAGLAAWS). At 91–104 (RLPSRTGAPRLDWS) the chain is on the cytoplasmic side. The chain crosses the membrane as a helical span at residues 105–125 (ITLFSLSTLPNTLVMGIPLLI). 2 residues coordinate (indol-3-yl)acetate: N115 and L117. At 126-134 (AMYGPYSGS) the chain is on the extracellular side. A helical membrane pass occupies residues 135–155 (LMVQIVVLQCIIWYTLMLFLF). Residue Y148 participates in (indol-3-yl)acetate binding. The Cytoplasmic segment spans residues 156–478 (EFRAARMLIA…LIRNPNTYSS (323 aa)). Polar residues predominate over residues 281-293 (SLQSSRGPTPRQS). Positions 281–312 (SLQSSRGPTPRQSNFDEHSARPPKPPATTTGA) are disordered. A helical transmembrane segment spans residues 479–499 (LLGLAWSLVAFRWHVSMPAIV). The Extracellular portion of the chain corresponds to 500–502 (EKS). The chain crosses the membrane as a helical span at residues 503–523 (ISILSDAGLGMAMFSLGLFMA). Over 524–539 (LQPSIIACGKSAAVVS) the chain is Cytoplasmic. Residues 540 to 560 (MAVRFLAGPAVMAAASIAIGL) traverse the membrane as a helical segment. Residues 561–563 (RGT) are Extracellular-facing. The helical transmembrane segment at 564–584 (LLHVAIVQAALPQGIVPFVFA) threads the bilayer. Positions 578 and 579 each coordinate (indol-3-yl)acetate. The Cytoplasmic portion of the chain corresponds to 585-597 (KEYNVHPAILSTA). The helical transmembrane segment at 598–618 (VIFGMLIALPITLLYYILLGL) threads the bilayer.

The protein belongs to the auxin efflux carrier (TC 2.A.69.1) family. In terms of assembly, homodimer. Expressed in coleoptiles, roots, vascular bundles of leaves, shoots, lamina joints and vascular bundles of the lemma and filament. Expressed in stem bases, stems, leaves and young panicles.

It localises to the cell membrane. Acts as a component of the auxin efflux carrier. Involved in the polar auxin transport which may regulate crown root development and response to water stress. This chain is Auxin efflux carrier component 3a, found in Oryza sativa subsp. japonica (Rice).